An 886-amino-acid chain; its full sequence is MELRCGGLLFSSRFDSGNLAHVEKVESLSSDGEGVGGGASALTSGIASSPDYEFNVWTRPDCAETEFENGNRSWFYFSVRGGMPGKLIKINIMNMNKQSKLYSQGMAPFVRTLPTRPRWERIRDRPTFEMTETQFVLSFVHRFVEGRGATTFFAFCYPFSYSDCQELLNQLDQRFPENHPTHSSPLDTIYYHRELLCYSLDGLRVDLLTITSCHGLREDREPRLEQLFPDTSTPRPFRFAGKRIFFLSSRVHPGETPSSFVFNGFLDFILRPDDPRAQTLRRLFVFKLIPMLNPDGVVRGHYRTDSRGVNLNRQYLKPDAVLHPAIYGAKAVLLYHHVHSRLNSQSSSEHQPSSCLPPDAPVSDLEKANNLQNEAQCGHSADRHNAEAWKQTEPAEQKLNSVWIMPQQSAGLEESAPDTIPPKESGVAYYVDLHGHASKRGCFMYGNSFSDESTQVENMLYPKLISLNSAHFDFQGCNFSEKNMYARDRRDGQSKEGSGRVAIYKASGIIHSYTLECNYNTGRSVNSIPAACHDNGRASPPPPPAFPSRYTVELFEQVGRAMAIAALDMAECNPWPRIVLSEHSSLTNLRAWMLKHVRNSRGLSSTLNVGVNKKRGLRTPPKSHNGLPVSCSENTLSRARSFSTGTSAGGSSSSQQNSPQMKNSPSFPFHGSRPAGLPGLGSSTQKVTHRVLGPVREPRSQDRRRQQQPLNHRPAGSLAPSPAPTSSGPASSHKLGSCLLPDSFNIPGSSCSLLSSGDKPEAVMVIGKGLLGTGARMPCIKTRLQARPRLGRGSPPTRRGMKGSSGPTSPTPRTRESSELELGSCSATPGLPQARPPRPRSAPAFSPISCSLSDSPSWNCYSRGPLGQPEVCFVPKSPPLTVSPRV.

The Peptidase M14 domain occupies 157-570; the sequence is YPFSYSDCQE…AMAIAALDMA (414 aa). 2 residues coordinate Zn(2+): histidine 252 and glutamate 255. Positions 344 to 354 are enriched in low complexity; sequence SQSSSEHQPSS. The disordered stretch occupies residues 344–364; sequence SQSSSEHQPSSCLPPDAPVSD. A Zn(2+)-binding site is contributed by histidine 434. Glutamate 516 acts as the Proton donor/acceptor in catalysis. 2 disordered regions span residues 605-734 and 784-848; these read STLN…SSHK and LQAR…FSPI. Residues 631 to 640 are compositionally biased toward polar residues; the sequence is CSENTLSRAR. The segment covering 641–666 has biased composition (low complexity); that stretch reads SFSTGTSAGGSSSSQQNSPQMKNSPS. Residues 696–705 show a composition bias toward basic and acidic residues; sequence REPRSQDRRR. Residues 714-732 show a composition bias toward low complexity; the sequence is PAGSLAPSPAPTSSGPASS. Position 841 is a phosphoserine (serine 841).

The protein belongs to the peptidase M14 family. Zn(2+) is required as a cofactor. In terms of tissue distribution, expressed in brain.

It localises to the cytoplasm. The protein resides in the cytosol. Its subcellular location is the nucleus. The protein localises to the cytoskeleton. It is found in the spindle. It localises to the midbody. It carries out the reaction gamma-L-glutamyl-L-glutamyl-[protein] + H2O = L-glutamyl-[protein] + L-glutamate. It catalyses the reaction (L-glutamyl)(n+1)-gamma-L-glutamyl-L-glutamyl-[protein] + H2O = (L-glutamyl)(n)-gamma-L-glutamyl-L-glutamyl-[protein] + L-glutamate. The catalysed reaction is C-terminal L-alpha-aminoacyl-L-glutamyl-[tubulin] + H2O = C-terminal L-alpha-aminoacyl-[tubulin] + L-glutamate. The enzyme catalyses C-terminal L-alpha-aminoacyl-L-glutamyl-L-glutamyl-[tubulin] + H2O = C-terminal L-alpha-aminoacyl-L-glutamyl-[tubulin] + L-glutamate. Its function is as follows. Metallocarboxypeptidase that mediates deglutamylation of tubulin and non-tubulin target proteins. Catalyzes the removal of polyglutamate side chains present on the gamma-carboxyl group of glutamate residues within the C-terminal tail of alpha- and beta-tubulin. Cleaves alpha- and gamma-linked polyglutamate tubulin side-chain, as well as the branching point glutamate. Also catalyzes the removal of alpha-linked glutamate residues from the carboxy-terminus of alpha-tubulin. Mediates deglutamylation of nucleotidyltransferase CGAS, leading to CGAS antiviral defense response activation. The sequence is that of Cytosolic carboxypeptidase-like protein 5 from Homo sapiens (Human).